The primary structure comprises 257 residues: uncharacterized protein (257 aa).

The helical transmembrane segment at 6 to 26 (IFWLNLAAIIIISIVVSGGMF) threads the bilayer.

It belongs to the staphylococcal tandem lipoprotein family.

The protein resides in the cell membrane. This is an uncharacterized protein from Staphylococcus aureus (strain Mu50 / ATCC 700699).